A 93-amino-acid polypeptide reads, in one-letter code: Small ribosomal subunit protein uS19 (93 aa).

This sequence belongs to the universal ribosomal protein uS19 family.

Functionally, protein S19 forms a complex with S13 that binds strongly to the 16S ribosomal RNA. The sequence is that of Small ribosomal subunit protein uS19 from Ehrlichia ruminantium (strain Welgevonden).